Here is a 209-residue protein sequence, read N- to C-terminus: Small ribosomal subunit protein uS3 (209 aa).

The KH type-2 domain occupies 38-107; the sequence is IRKFIKNRYY…RVVINIEEIK (70 aa).

Belongs to the universal ribosomal protein uS3 family. Part of the 30S ribosomal subunit. Forms a tight complex with proteins S10 and S14.

Binds the lower part of the 30S subunit head. Binds mRNA in the 70S ribosome, positioning it for translation. This chain is Small ribosomal subunit protein uS3, found in Thermotoga petrophila (strain ATCC BAA-488 / DSM 13995 / JCM 10881 / RKU-1).